A 147-amino-acid chain; its full sequence is Alpha-amylase/trypsin inhibitor (147 aa).

Residues 1–21 form the signal peptide; the sequence is MASDHRRFVLSGAVLLSVLAV.

This sequence belongs to the protease inhibitor I6 (cereal trypsin/alpha-amylase inhibitor) family. In terms of processing, five disulfide bonds, which are essential for the inhibitor activity, are probably present. Endosperm.

The protein localises to the secreted. Functionally, alpha-amylase/trypsin inhibitor. This Hordeum vulgare (Barley) protein is Alpha-amylase/trypsin inhibitor.